The sequence spans 222 residues: Superoxide dismutase [Cu-Zn], chloroplastic (222 aa).

The N-terminal 68 residues, 1–68, are a transit peptide targeting the chloroplast; sequence MAAHTILASA…AASKPLTIVA (68 aa). Histidine 114, histidine 116, and histidine 131 together coordinate Cu cation. Cysteine 125 and cysteine 214 form a disulfide bridge. Positions 131, 139, 148, and 151 each coordinate Zn(2+). Histidine 188 contributes to the Cu cation binding site.

Belongs to the Cu-Zn superoxide dismutase family. In terms of assembly, homotetramer. Cu cation serves as cofactor. The cofactor is Zn(2+).

It localises to the plastid. The protein localises to the chloroplast. It catalyses the reaction 2 superoxide + 2 H(+) = H2O2 + O2. Destroys radicals which are normally produced within the cells and which are toxic to biological systems. The chain is Superoxide dismutase [Cu-Zn], chloroplastic (SODCP) from Spinacia oleracea (Spinach).